A 242-amino-acid chain; its full sequence is Arginine transport ATP-binding protein ArtP (242 aa).

The region spanning 3 to 241 (IQLNGINCFY…QTEAFKNYLS (239 aa)) is the ABC transporter domain. 35-42 (GPSGAGKS) lines the ATP pocket.

The protein belongs to the ABC transporter superfamily. As to quaternary structure, the complex is composed of two ATP-binding proteins (ArtP), two transmembrane proteins (ArtM and ArtQ) and two solute-binding proteins (ArtJ and ArtI).

Its subcellular location is the cell inner membrane. The enzyme catalyses a polar amino acid(out) + ATP + H2O = a polar amino acid(in) + ADP + phosphate + H(+). It catalyses the reaction L-arginine(out) + ATP + H2O = L-arginine(in) + ADP + phosphate + H(+). Functionally, part of the ABC transporter complex ArtPIQMJ involved in arginine transport. Probably responsible for energy coupling to the transport system. The polypeptide is Arginine transport ATP-binding protein ArtP (artP) (Escherichia coli O157:H7).